Here is a 432-residue protein sequence, read N- to C-terminus: Ubiquitin-like modifier-activating enzyme 5 (432 aa).

Positions 25–47 (ETKKNQTPSVLKGPTVSQERPSA) are disordered. Over residues 29–44 (NQTPSVLKGPTVSQER) the composition is skewed to polar residues. ATP is bound by residues G96, D117, K140, N163, and N196. Zn(2+) contacts are provided by C238 and C241. Residue C262 is the Glycyl thioester intermediate of the active site. Positions 315 and 320 each coordinate Zn(2+). Positions 363–406 (DTTEAPSSSAATEVAPGLKFAYEPTQTPKKNSSDNLKLSPSQAV) are disordered. Positions 386-406 (PTQTPKKNSSDNLKLSPSQAV) are enriched in polar residues.

It belongs to the ubiquitin-activating E1 family. UBA5 subfamily. In terms of assembly, interacts with ufc-1.

Its function is as follows. E1-like enzyme which activates ufm-1. Required for interaction between ufm-1 and ufc-1. The polypeptide is Ubiquitin-like modifier-activating enzyme 5 (Caenorhabditis briggsae).